Here is a 357-residue protein sequence, read N- to C-terminus: MSFSLGELAASLGATVQGDAGLIVKSIAPLDQAGADQLAFLSNPLYLNQAVSSGAGAIIVSPRDLETLESQGHAAGRNWLIAANPYAAFARVAQRFVALAARPVVPGIHRTASVEEGARVPASCSIGPNVTIEAGAVLGERVRIAGNSFVGADARIGDDTLLYANVSIYHGCVVGARCVLHSGVVIGADGFGFAPDFGPQGGEWVKIPQVGRAVIGDDVEIGANTAIDRGAMADTVVEQGCKIDNQVQIAHNVHVGAYTVIAGCAAISGSTKIGRYCIIGGAANFAGHLTIADRVTVSGGTSITKSITKPGGHFTSVFPFMPHGDWERNAAIVRGLTRMRERLQQLEQRVKDLQQQS.

His-251 acts as the Proton acceptor in catalysis.

Belongs to the transferase hexapeptide repeat family. LpxD subfamily. As to quaternary structure, homotrimer.

It catalyses the reaction a UDP-3-O-[(3R)-3-hydroxyacyl]-alpha-D-glucosamine + a (3R)-hydroxyacyl-[ACP] = a UDP-2-N,3-O-bis[(3R)-3-hydroxyacyl]-alpha-D-glucosamine + holo-[ACP] + H(+). Its pathway is bacterial outer membrane biogenesis; LPS lipid A biosynthesis. Its function is as follows. Catalyzes the N-acylation of UDP-3-O-acylglucosamine using 3-hydroxyacyl-ACP as the acyl donor. Is involved in the biosynthesis of lipid A, a phosphorylated glycolipid that anchors the lipopolysaccharide to the outer membrane of the cell. The polypeptide is UDP-3-O-acylglucosamine N-acyltransferase (Ralstonia pickettii (strain 12J)).